The primary structure comprises 465 residues: tRNA modification GTPase MnmE (465 aa).

(6S)-5-formyl-5,6,7,8-tetrahydrofolate is bound by residues R21, E85, and K124. The region spanning 220–387 (GVPVAIIGET…LQQRLVAAAH (168 aa)) is the TrmE-type G domain. A K(+)-binding site is contributed by N230. Residues 230–235 (NAGKST), 249–255 (SDIHGTT), and 274–277 (DTAG) contribute to the GTP site. S234 serves as a coordination point for Mg(2+). 3 residues coordinate K(+): S249, I251, and T254. T255 contributes to the Mg(2+) binding site. Residue K465 participates in (6S)-5-formyl-5,6,7,8-tetrahydrofolate binding.

Belongs to the TRAFAC class TrmE-Era-EngA-EngB-Septin-like GTPase superfamily. TrmE GTPase family. As to quaternary structure, homodimer. Heterotetramer of two MnmE and two MnmG subunits. K(+) is required as a cofactor.

It localises to the cytoplasm. Its function is as follows. Exhibits a very high intrinsic GTPase hydrolysis rate. Involved in the addition of a carboxymethylaminomethyl (cmnm) group at the wobble position (U34) of certain tRNAs, forming tRNA-cmnm(5)s(2)U34. The polypeptide is tRNA modification GTPase MnmE (Bacteroides fragilis (strain ATCC 25285 / DSM 2151 / CCUG 4856 / JCM 11019 / LMG 10263 / NCTC 9343 / Onslow / VPI 2553 / EN-2)).